Consider the following 124-residue polypeptide: Fluoride-specific ion channel FluC (124 aa).

4 helical membrane-spanning segments follow: residues 1 to 21 (MIPLILAVSAGGVAGTLLRFA), 38 to 58 (TLAVNIVGCLLIGVLYGLFLV), 69 to 89 (GLIVGFLGGLTTFSSFSLDTV), and 97 to 117 (VALALGYAALSVFGGLLATWA). Residues glycine 76 and threonine 79 each coordinate Na(+).

The protein belongs to the fluoride channel Fluc/FEX (TC 1.A.43) family.

The protein localises to the cell inner membrane. The catalysed reaction is fluoride(in) = fluoride(out). Its activity is regulated as follows. Na(+) is not transported, but it plays an essential structural role and its presence is essential for fluoride channel function. Its function is as follows. Fluoride-specific ion channel. Important for reducing fluoride concentration in the cell, thus reducing its toxicity. This chain is Fluoride-specific ion channel FluC, found in Pseudomonas fluorescens (strain ATCC BAA-477 / NRRL B-23932 / Pf-5).